A 510-amino-acid chain; its full sequence is Bifunctional purine biosynthesis protein PurH (510 aa).

One can recognise an MGS-like domain in the interval 1–142 (MRALLSVSDK…KNYKDVMVLC (142 aa)).

It belongs to the PurH family.

The enzyme catalyses (6R)-10-formyltetrahydrofolate + 5-amino-1-(5-phospho-beta-D-ribosyl)imidazole-4-carboxamide = 5-formamido-1-(5-phospho-D-ribosyl)imidazole-4-carboxamide + (6S)-5,6,7,8-tetrahydrofolate. The catalysed reaction is IMP + H2O = 5-formamido-1-(5-phospho-D-ribosyl)imidazole-4-carboxamide. The protein operates within purine metabolism; IMP biosynthesis via de novo pathway; 5-formamido-1-(5-phospho-D-ribosyl)imidazole-4-carboxamide from 5-amino-1-(5-phospho-D-ribosyl)imidazole-4-carboxamide (10-formyl THF route): step 1/1. It functions in the pathway purine metabolism; IMP biosynthesis via de novo pathway; IMP from 5-formamido-1-(5-phospho-D-ribosyl)imidazole-4-carboxamide: step 1/1. The chain is Bifunctional purine biosynthesis protein PurH from Campylobacter jejuni subsp. doylei (strain ATCC BAA-1458 / RM4099 / 269.97).